Consider the following 67-residue polypeptide: N-(5'-phosphoribosyl)anthranilate isomerase (67 aa).

This sequence belongs to the TrpF family.

It carries out the reaction N-(5-phospho-beta-D-ribosyl)anthranilate = 1-(2-carboxyphenylamino)-1-deoxy-D-ribulose 5-phosphate. Its pathway is amino-acid biosynthesis; L-tryptophan biosynthesis; L-tryptophan from chorismate: step 3/5. In Methanococcus voltae, this protein is N-(5'-phosphoribosyl)anthranilate isomerase (trpF).